Consider the following 406-residue polypeptide: MSFPIERVRSEFPLLAREVNGQPLAYLDSAASAQKPQAVIDRELDFYRHGYAAVHRGIHTLSAEATQEMEAVREKVAAFINAGSAEEIIFVKGTTEGINLVANSFGRHFLQPGDSIIITEMEHHANIVPWQMLAQERGLNLRVWPLQPDGTLDLARLPGLIDASTKLLALTQVSNVLGTVNPVQEITAQAKAAGLKVLIDGAQAVMHQRVDVQALDCDFYVFSGHKLYGPSGIGILYGRQALLQQMPPWEGGGSMIQQVSLTAGTTYAEPPWRFEAGSPNTAGMMGLGAAIDYVNTLGLEAIGDYEQSLMHYALEALQQVPRLKIYGPAERAGVIAFNLGEHHAYDVGSFLDQYGIAIRTGHHCAMPLMAFYNVPSMCRASLALYNTRDEVDRLVAGLQRIQKLLG.

Lys226 carries the post-translational modification N6-(pyridoxal phosphate)lysine. Cys364 functions as the Cysteine persulfide intermediate in the catalytic mechanism.

It belongs to the class-V pyridoxal-phosphate-dependent aminotransferase family. Csd subfamily. In terms of assembly, homodimer. Interacts with SufE and the SufBCD complex composed of SufB, SufC and SufD. The interaction with SufE is required to mediate the direct transfer of the sulfur atom from the S-sulfanylcysteine. Pyridoxal 5'-phosphate serves as cofactor.

The protein resides in the cytoplasm. The catalysed reaction is (sulfur carrier)-H + L-cysteine = (sulfur carrier)-SH + L-alanine. It carries out the reaction L-selenocysteine + AH2 = hydrogenselenide + L-alanine + A + H(+). It participates in cofactor biosynthesis; iron-sulfur cluster biosynthesis. In terms of biological role, cysteine desulfurases mobilize the sulfur from L-cysteine to yield L-alanine, an essential step in sulfur metabolism for biosynthesis of a variety of sulfur-containing biomolecules. Component of the suf operon, which is activated and required under specific conditions such as oxidative stress and iron limitation. Acts as a potent selenocysteine lyase in vitro, that mobilizes selenium from L-selenocysteine. Selenocysteine lyase activity is however unsure in vivo. In Serratia proteamaculans (strain 568), this protein is Cysteine desulfurase.